A 599-amino-acid polypeptide reads, in one-letter code: Stromal 70 kDa heat shock-related protein, chloroplastic (599 aa).

A disordered region spans residues 545–573 (NQPGAGGEPGAAQAQHQEQSSARQIQRAK). Low complexity predominate over residues 554–568 (GAAQAQHQEQSSARQ).

It belongs to the heat shock protein 70 family.

Its subcellular location is the plastid. The protein resides in the chloroplast stroma. In terms of biological role, interacts with newly imported chloroplast proteins to assist in their maturation. The chain is Stromal 70 kDa heat shock-related protein, chloroplastic (CHSP70) from Spinacia oleracea (Spinach).